A 110-amino-acid polypeptide reads, in one-letter code: MSETRAVLRGVRLSVDKGRLVADLIRGKKVDQALNILAFTQKKAAVIVKKVLESAIANAEHNDGADIDDLKVKTIFVEQGTTLKRFTARAKGRGNRISKPTCHIYVTVGN.

This sequence belongs to the universal ribosomal protein uL22 family. Part of the 50S ribosomal subunit.

This protein binds specifically to 23S rRNA; its binding is stimulated by other ribosomal proteins, e.g. L4, L17, and L20. It is important during the early stages of 50S assembly. It makes multiple contacts with different domains of the 23S rRNA in the assembled 50S subunit and ribosome. In terms of biological role, the globular domain of the protein is located near the polypeptide exit tunnel on the outside of the subunit, while an extended beta-hairpin is found that lines the wall of the exit tunnel in the center of the 70S ribosome. This chain is Large ribosomal subunit protein uL22, found in Acidovorax ebreus (strain TPSY) (Diaphorobacter sp. (strain TPSY)).